The primary structure comprises 786 residues: MVIVKKVILNNVKTHSKREFDFEKGINLILGPNGSGKTTLVESIFLALFGGDFARVIDYFKKGEKTMAITLILEDKGKTYRIRRKWVLENNAKLVESSLELIDTIPKKLASDHNKLLQQIKHLFGLDKKIIPLIYYKQNEITKIIEMDPRKRKEWFDEILGIKDLEEFSEKLKMAIKLIKTGKISRIEDRIKLLKAELNKKSLLENKLKNYKEKLVLLSNELENLEKEYKILENQYKEYLELKAKLKSIEGQINNINVKEIESKINNIREELNNIEELTDYEKDILSKKHEIIRCNEIKNRLKELEKEIKDYDKIKKEFLEIESKYKQYEEKRLEYEKAKMLEKEKEKAKREYSYLLKEKESLEKEIAELQNKINQIKELEKMEQELLEIQERIGVIKAKLKLLENIKDRCPLCGAKLSSDTIEHLQKEREKLQKEYYYLKEKYNQLLIKIRALEKYKGLEKVLEAKTKHLETIENRLKEIKPIIELEIPKIELDESIPYKYKQLLNKVSYLEAKIKEYERYKNIECPYDIAIEELKRIEDKYNKYIKKPALERELNLLLKELERYNSLLKEKEEILSKLNPEIETKYKELTKKKENLLSEISKVKGIIKEIESQIKEIEKHESTIKQLEEKKRKWEKLVEKLNRIVKALGRDGIPKALREGAINYINDMANIYLREFTDKYKLKVNNDLSIYAIPIDNPHYEIEAKNLSGGEKVVFSLSIALAIISWLSLQNMFMVLDEPTANLDNERTLALRKTFDKLEKMVEQAIIVTHNELLDTGENHVVRL.

Residues Lys13, 33-39 (NGSGKTT), and Gln138 each bind ATP. 3 coiled-coil regions span residues 194–249 (LKAE…LKSI), 337–455 (EKAK…RALE), and 551–650 (ALER…VKAL). Residues 366 to 459 (EIAELQNKIN…KIRALEKYKG (94 aa)) form the Zinc-hook domain. Zn(2+) contacts are provided by Cys411 and Cys414.

Belongs to the SMC family. RAD50 subfamily. In terms of assembly, homodimer. Forms a heterotetramer composed of two Mre11 subunits and two Rad50 subunits. It depends on Zn(2+) as a cofactor.

Functionally, part of the Rad50/Mre11 complex, which is involved in the early steps of DNA double-strand break (DSB) repair. The complex may facilitate opening of the processed DNA ends to aid in the recruitment of HerA and NurA. Rad50 controls the balance between DNA end bridging and DNA resection via ATP-dependent structural rearrangements of the Rad50/Mre11 complex. The sequence is that of DNA double-strand break repair Rad50 ATPase from Nanoarchaeum equitans (strain Kin4-M).